The primary structure comprises 652 residues: Acetyl-coenzyme A synthetase (652 aa).

Residues 191-194, T311, and N335 contribute to the CoA site; that span reads RAGR. ATP-binding positions include 387–389, 411–416, D500, and R515; these read GEP and DTWWQT. S523 contacts CoA. Position 526 (R526) interacts with ATP. Mg(2+) contacts are provided by V537, H539, and I542. CoA is bound at residue R584. N6-acetyllysine is present on K609.

Belongs to the ATP-dependent AMP-binding enzyme family. It depends on Mg(2+) as a cofactor. Acetylated. Deacetylation by the SIR2-homolog deacetylase activates the enzyme.

It carries out the reaction acetate + ATP + CoA = acetyl-CoA + AMP + diphosphate. In terms of biological role, catalyzes the conversion of acetate into acetyl-CoA (AcCoA), an essential intermediate at the junction of anabolic and catabolic pathways. Acs undergoes a two-step reaction. In the first half reaction, Acs combines acetate with ATP to form acetyl-adenylate (AcAMP) intermediate. In the second half reaction, it can then transfer the acetyl group from AcAMP to the sulfhydryl group of CoA, forming the product AcCoA. Its function is as follows. Enables the cell to use acetate during aerobic growth to generate energy via the TCA cycle, and biosynthetic compounds via the glyoxylate shunt. Acetylates CheY, the response regulator involved in flagellar movement and chemotaxis. In Sodalis glossinidius (strain morsitans), this protein is Acetyl-coenzyme A synthetase.